A 472-amino-acid chain; its full sequence is Adenosylhomocysteinase (472 aa).

Substrate-binding residues include T61, D136, and E196. 197–199 (TTT) provides a ligand contact to NAD(+). Substrate contacts are provided by K226 and D230. Residues N231, 260 to 265 (GYGDVG), E283, N318, 339 to 341 (IGH), and N384 contribute to the NAD(+) site.

This sequence belongs to the adenosylhomocysteinase family. The cofactor is NAD(+).

The protein resides in the cytoplasm. The enzyme catalyses S-adenosyl-L-homocysteine + H2O = L-homocysteine + adenosine. The protein operates within amino-acid biosynthesis; L-homocysteine biosynthesis; L-homocysteine from S-adenosyl-L-homocysteine: step 1/1. Functionally, may play a key role in the regulation of the intracellular concentration of adenosylhomocysteine. This is Adenosylhomocysteinase from Cupriavidus metallidurans (strain ATCC 43123 / DSM 2839 / NBRC 102507 / CH34) (Ralstonia metallidurans).